Consider the following 235-residue polypeptide: Phosphoribosylaminoimidazole-succinocarboxamide synthase (235 aa).

The protein belongs to the SAICAR synthetase family.

The enzyme catalyses 5-amino-1-(5-phospho-D-ribosyl)imidazole-4-carboxylate + L-aspartate + ATP = (2S)-2-[5-amino-1-(5-phospho-beta-D-ribosyl)imidazole-4-carboxamido]succinate + ADP + phosphate + 2 H(+). It participates in purine metabolism; IMP biosynthesis via de novo pathway; 5-amino-1-(5-phospho-D-ribosyl)imidazole-4-carboxamide from 5-amino-1-(5-phospho-D-ribosyl)imidazole-4-carboxylate: step 1/2. The sequence is that of Phosphoribosylaminoimidazole-succinocarboxamide synthase from Sulfolobus acidocaldarius (strain ATCC 33909 / DSM 639 / JCM 8929 / NBRC 15157 / NCIMB 11770).